The chain runs to 563 residues: Sulfite reductase [NADPH] hemoprotein beta-component (563 aa).

The [4Fe-4S] cluster site is built by cysteine 427, cysteine 433, cysteine 472, and cysteine 476. Cysteine 476 lines the siroheme pocket.

The protein belongs to the nitrite and sulfite reductase 4Fe-4S domain family. As to quaternary structure, alpha(8)-beta(8). The alpha component is a flavoprotein, the beta component is a hemoprotein. Requires siroheme as cofactor. The cofactor is [4Fe-4S] cluster.

The catalysed reaction is hydrogen sulfide + 3 NADP(+) + 3 H2O = sulfite + 3 NADPH + 4 H(+). Its pathway is sulfur metabolism; hydrogen sulfide biosynthesis; hydrogen sulfide from sulfite (NADPH route): step 1/1. Its function is as follows. Component of the sulfite reductase complex that catalyzes the 6-electron reduction of sulfite to sulfide. This is one of several activities required for the biosynthesis of L-cysteine from sulfate. In Acidithiobacillus ferrooxidans (strain ATCC 53993 / BNL-5-31) (Leptospirillum ferrooxidans (ATCC 53993)), this protein is Sulfite reductase [NADPH] hemoprotein beta-component.